A 69-amino-acid polypeptide reads, in one-letter code: Conotoxin Eb6.9 (69 aa).

The first 17 residues, 1-17, serve as a signal peptide directing secretion; it reads VLIIAVLFLTACQLTTA. Positions 18-41 are excised as a propeptide; that stretch reads ETYSRGRQKHRARRSTDKNSKWTR. Intrachain disulfides connect cysteine 43–cysteine 57, cysteine 50–cysteine 61, and cysteine 56–cysteine 68.

This sequence belongs to the conotoxin O1 superfamily. In terms of tissue distribution, expressed by the venom duct.

The protein localises to the secreted. The chain is Conotoxin Eb6.9 (E1) from Conus ebraeus (Hebrew cone).